The sequence spans 374 residues: Queuine tRNA-ribosyltransferase (374 aa).

Residue Asp-89 is the Proton acceptor of the active site. Residues 89–93 (DSGGF), Asp-143, Gln-187, and Gly-214 contribute to the substrate site. The interval 245–251 (GVGKPED) is RNA binding. Residue Asp-264 is the Nucleophile of the active site. Residues 269–273 (TRNAR) are RNA binding; important for wobble base 34 recognition. Residues Cys-302, Cys-304, Cys-307, and His-333 each contribute to the Zn(2+) site.

It belongs to the queuine tRNA-ribosyltransferase family. In terms of assembly, homodimer. Within each dimer, one monomer is responsible for RNA recognition and catalysis, while the other monomer binds to the replacement base PreQ1. Zn(2+) is required as a cofactor.

The catalysed reaction is 7-aminomethyl-7-carbaguanine + guanosine(34) in tRNA = 7-aminomethyl-7-carbaguanosine(34) in tRNA + guanine. Its pathway is tRNA modification; tRNA-queuosine biosynthesis. Functionally, catalyzes the base-exchange of a guanine (G) residue with the queuine precursor 7-aminomethyl-7-deazaguanine (PreQ1) at position 34 (anticodon wobble position) in tRNAs with GU(N) anticodons (tRNA-Asp, -Asn, -His and -Tyr). Catalysis occurs through a double-displacement mechanism. The nucleophile active site attacks the C1' of nucleotide 34 to detach the guanine base from the RNA, forming a covalent enzyme-RNA intermediate. The proton acceptor active site deprotonates the incoming PreQ1, allowing a nucleophilic attack on the C1' of the ribose to form the product. After dissociation, two additional enzymatic reactions on the tRNA convert PreQ1 to queuine (Q), resulting in the hypermodified nucleoside queuosine (7-(((4,5-cis-dihydroxy-2-cyclopenten-1-yl)amino)methyl)-7-deazaguanosine). The sequence is that of Queuine tRNA-ribosyltransferase from Shewanella baltica (strain OS223).